Reading from the N-terminus, the 653-residue chain is MGNGMCSRKQKRIFQTLLLLTVVFGFLYGAMLYLELQTQLRKAEAVALKYQQHQDSLSAQLQVVYEHRSRLEKSLQKERLEHKKAKEDFLVYKLEAQETLNKGRQDSNSRYSALNVQHQMLKSQHEELRKQHSDLEEEHRKQGEDFSRAFNDHKQRYLQLQQEKEQELSKLKETVYNLREENRQLRKAHQDIHTQLQDVKTQVAEYKQLKDTLNRIPSFRNPDPAEQQNVTFTHGTHPPQGYNVREKLTGELQEGQQNHDAMPRRMEEKPLSSMQKEAGFQALEEQNQVEPREPEGRQVEEEHRKALEEEEMEQVGQAEHLEEEHDPSPEEQDREWRDQRRQNAAHLLDGRPQAEIEHSTKAATNFRSPYEEQLEQQRLAARRDEEAQRLREHQEALHQQRLHGQLLRQQQQQQYLAREMAQQKQADHEEGQQQYQLRQQAHSDAVENDVAQGAEDQGIPEEEGGAYDRDNQRQDEAEGDPGNRQEFHEPGHQEGDPEAEADRAAAQDINPADDPNNQGEDEFEEAEQVREENLPEESEERKQSEAKQGNVEMDEHLVMAGNPDQQEDNVDEQYQEEGEEEVQEDLTEEKKRELEHNAEETYGENPDDKNNDVEEQGVPNRAHPKGRQEHYEEEEDEEDGAAVAEKSHRRAEM.

Glycine 2 is lipidated: N-myristoyl glycine. Topologically, residues 2 to 12 are cytoplasmic; the sequence is GNGMCSRKQKR. The chain crosses the membrane as a helical; Signal-anchor for type II membrane protein span at residues 13–33; the sequence is IFQTLLLLTVVFGFLYGAMLY. Residues 34-653 are Lumenal-facing; that stretch reads LELQTQLRKA…AEKSHRRAEM (620 aa). Residues 38-107 form a golgi targeting region; the sequence is TQLRKAEAVA…ETLNKGRQDS (70 aa). Residues 66–216 are a coiled coil; sequence EHRSRLEKSL…KQLKDTLNRI (151 aa). The tract at residues 80 to 175 is endosome targeting; it reads LEHKKAKEDF…QELSKLKETV (96 aa). The disordered stretch occupies residues 122–143; sequence KSQHEELRKQHSDLEEEHRKQG. A compositionally biased stretch (basic and acidic residues) spans 123 to 143; that stretch reads SQHEELRKQHSDLEEEHRKQG. The tract at residues 176–220 is golgi targeting; it reads YNLREENRQLRKAHQDIHTQLQDVKTQVAEYKQLKDTLNRIPSFR. The N-linked (GlcNAc...) asparagine glycan is linked to asparagine 229. Residues 253–653 form a disordered region; that stretch reads QEGQQNHDAM…AEKSHRRAEM (401 aa). Basic and acidic residues-rich tracts occupy residues 261–270, 290–307, 319–328, 348–360, and 381–398; these read AMPRRMEEKP, EPRE…RKAL, EHLEEEHDPS, LDGR…EHST, and ARRD…EALH. Serine 328 is modified (phosphoserine). A compositionally biased stretch (low complexity) spans 399-423; the sequence is QQRLHGQLLRQQQQQQYLAREMAQQ. 2 stretches are compositionally biased toward basic and acidic residues: residues 466 to 505 and 527 to 545; these read AYDR…DRAA and EQVR…KQSE. Serine 538 bears the Phosphoserine mark. A compositionally biased stretch (acidic residues) spans 565 to 587; the sequence is QQEDNVDEQYQEEGEEEVQEDLT. Tyrosine 574 carries the phosphotyrosine modification. Threonine 587 carries the post-translational modification Phosphothreonine. A compositionally biased stretch (basic and acidic residues) spans 588–599; that stretch reads EEKKRELEHNAE. Tyrosine 631 is modified (phosphotyrosine). The span at 631 to 640 shows a compositional bias: acidic residues; it reads YEEEEDEEDG.

The protein belongs to the GOLIM4 family. In terms of processing, phosphorylated by c-AMP-dependent kinases most probably in its lumenal part. Post-translationally, O-glycosylated; modified by sialic acid residues. N-glycosylated; N-glycans are of the complex type and modified by sialic acid residues. As to expression, expressed in liver, pancreas and pituitary (at protein level).

The protein localises to the golgi apparatus. It is found in the golgi stack membrane. Its subcellular location is the endosome membrane. It localises to the membrane. Plays a role in endosome to Golgi protein trafficking; mediates protein transport along the late endosome-bypass pathway from the early endosome to the Golgi. The sequence is that of Golgi integral membrane protein 4 (Golim4) from Rattus norvegicus (Rat).